We begin with the raw amino-acid sequence, 326 residues long: G-protein coupled receptor 171 (326 aa).

The Extracellular portion of the chain corresponds to 1–19 (MTNSSMFCPIYRDLEPFTY). The helical transmembrane segment at 20–40 (FFYLVYLIGIIGSCFATWAFI) threads the bilayer. At 41–48 (QKSTNHRC) the chain is on the cytoplasmic side. The chain crosses the membrane as a helical span at residues 49–69 (VSIYLINLLTADFLLTLALPV). The Extracellular portion of the chain corresponds to 70-89 (KIVVDLGVAPWKLRIFHCQV). A disulfide bridge connects residues C87 and C165. The chain crosses the membrane as a helical span at residues 90–110 (TACLIYINMYLSIIFLAFVSI). Residues 111 to 133 (DRCLQLVHSCKIYRIQEPGFAKM) lie on the Cytoplasmic side of the membrane. A helical transmembrane segment spans residues 134–154 (ISAVVWLMVLLIMVPNMVIPI). Topologically, residues 155-182 (KNIKEKSNVGCMEFKREFGKNWHLLTNF) are extracellular. The helical transmembrane segment at 183–203 (ICVAIFLNFSAIILISNFLVI) threads the bilayer. Residues 204-221 (RQLYRNRDNANYPSVKSA) are Cytoplasmic-facing. The chain crosses the membrane as a helical span at residues 222 to 242 (LLNILLVTASYIICFVPYHAV). The Extracellular segment spans residues 243–268 (RIPYTLSQTEVISDCSTRIALFKAKE). Residues 269–289 (ATLLLAVSNLCFDPILYYHLS) form a helical membrane-spanning segment. The Cytoplasmic segment spans residues 290-326 (KAFRLKVTETFASPQKMKAREEKPRRENDVQSTGSAC). The segment at 305–326 (KMKAREEKPRRENDVQSTGSAC) is disordered. Positions 307 to 318 (KAREEKPRREND) are enriched in basic and acidic residues.

It belongs to the G-protein coupled receptor 1 family.

Its subcellular location is the cell membrane. G-protein coupled receptor for Big LEN, a 16-amino acid neuropeptide produced from the precursor protein, proSAAS (encoded by PCSK1N). Acts through a G(i)-alpha-mediated pathway in response to Big LEN. Big LEN-GPR171 system plays an important role in regulating feeding and metabolism. Also plays a role in modulating fear and anxiety-like behaviors in the basolateral amygdala. Big LEN-GPR171 modulates the mu-type opioid receptor signaling and antinociception. Acts as a negative regulator T cell function. The sequence is that of G-protein coupled receptor 171 from Rattus norvegicus (Rat).